Here is a 309-residue protein sequence, read N- to C-terminus: Protein FdhE (309 aa).

Belongs to the FdhE family.

Its subcellular location is the cytoplasm. Its function is as follows. Necessary for formate dehydrogenase activity. The protein is Protein FdhE of Salmonella dublin (strain CT_02021853).